The following is a 278-amino-acid chain: HCLS1-associated protein X-1 (278 aa).

An N-acetylserine modification is found at Ser-2. The tract at residues 2–43 is required for localization in mitochondria; sequence SVFDLFRGFFGFPGPRSHRDPFFGGMTRDDDDDEDDEEEEDS. Disordered regions lie at residues 15–50 and 99–262; these read GPRS…GRES and LPSH…ALDD. Positions 30–43 are enriched in acidic residues; sequence DDDDDEDDEEEEDS. The segment at 113 to 278 is involved in HCLS1 binding; the sequence is TPGVRLREGQ…LLLGRWFRSR (166 aa). Basic and acidic residues predominate over residues 132-152; it reads PDSHQPRIFEGVLESHAKPES. Residues 174 to 205 are involved in CASP9 binding; that stretch reads VSPHSRAREDKDLDSQVSQEGLGPLLQPQPKS. The segment at 175 to 246 is involved in GNA13 binding; that stretch reads SPHSRAREDK…TTVTHQEAHD (72 aa). The interval 182–278 is required for localization in sarcoplasmic reticulum; sequence EDKDLDSQVS…LLLGRWFRSR (97 aa). The tract at residues 183 to 278 is involved in PKD2 binding; sequence DKDLDSQVSQ…LLLGRWFRSR (96 aa). Phosphoserine is present on residues Ser-188 and Ser-191. The tract at residues 202-224 is involved in PLN binding; it reads QPKSYFKSISVTKITKPDGTVEE. Residues 202-244 form an involved in ATP2A2 binding region; sequence QPKSYFKSISVTKITKPDGTVEEHRTVVDSEGRRETTVTHQEA. The interval 209 to 278 is mediates interaction with UCP3; sequence SISVTKITKP…LLLGRWFRSR (70 aa). Residues 216–254 are compositionally biased toward basic and acidic residues; sequence TKPDGTVEEHRTVVDSEGRRETTVTHQEAHDSSRSDPDP. The tract at residues 269–278 is required for ITGB6 binding; sequence LLLGRWFRSR.

This sequence belongs to the HAX1 family. Interacts with ABCB1, ABCB4 and ABCB11. Directly associates with HCLS1/HS1, through binding to its N-terminal region. Interacts with CTTN. Interacts with PKD2. Interacts with GNA13. Interacts with CASP9. Interacts with ITGB6. Interacts with PLN and ATP2A2; these interactions are inhibited by calcium. Interacts with GRB7. Interacts (via C-terminus) with XIAP/BIRC4 (via BIR 2 domain and BIR 3 domain) and this interaction blocks ubiquitination of XIAP/BIRC4. Interacts with TPC2. Interacts with KCNC3. Interacts with XPO1. Interacts with RNF217. Interacts with UCP3; the interaction is direct and calcium-dependent. Interacts with MAPRE2; this interaction regulates cell migration in keratinocytes. As to expression, present in striated muscles (at protein level).

The protein localises to the mitochondrion matrix. It localises to the endoplasmic reticulum. The protein resides in the nucleus membrane. It is found in the cytoplasmic vesicle. Its subcellular location is the cytoplasm. The protein localises to the cell cortex. It localises to the cell membrane. The protein resides in the sarcoplasmic reticulum. It is found in the P-body. Its subcellular location is the nucleus. In terms of biological role, recruits the Arp2/3 complex to the cell cortex and regulates reorganization of the cortical actin cytoskeleton via its interaction with KCNC3 and the Arp2/3 complex. Slows down the rate of inactivation of KCNC3 channels. Promotes GNA13-mediated cell migration. Involved in the clathrin-mediated endocytosis pathway. May be involved in internalization of ABC transporters such as ABCB11. May inhibit CASP9 and CASP3. Promotes cell survival. May regulate intracellular calcium pools. This chain is HCLS1-associated protein X-1 (Hax1), found in Rattus norvegicus (Rat).